The sequence spans 104 residues: Large ribosomal subunit protein bL21c (104 aa).

This sequence belongs to the bacterial ribosomal protein bL21 family. Part of the 50S ribosomal subunit.

It is found in the plastid. Its subcellular location is the chloroplast. This protein binds to 23S rRNA. The protein is Large ribosomal subunit protein bL21c of Porphyra purpurea (Red seaweed).